An 856-amino-acid chain; its full sequence is Leucine--tRNA ligase (856 aa).

Residues 53-63 (PYPSGNLHMGH) carry the 'HIGH' region motif. The short motif at 622 to 626 (KMSKS) is the 'KMSKS' region element. Residue K625 participates in ATP binding.

The protein belongs to the class-I aminoacyl-tRNA synthetase family.

The protein resides in the cytoplasm. The catalysed reaction is tRNA(Leu) + L-leucine + ATP = L-leucyl-tRNA(Leu) + AMP + diphosphate. This chain is Leucine--tRNA ligase, found in Prochlorococcus marinus (strain MIT 9301).